The sequence spans 213 residues: Pyridoxine/pyridoxamine 5'-phosphate oxidase (213 aa).

FMN contacts are provided by residues 57-62 (RIVLLR), 77-78 (FT), Arg-83, Lys-84, and Gln-106. A substrate-binding site is contributed by Arg-62. Substrate contacts are provided by Tyr-124, Arg-128, and Ser-132. Residues 135–163 (GARASDQSRPLPDRKTLQKRVEEEEARYP) are disordered. 141–142 (QS) is a binding site for FMN. The segment covering 145–163 (LPDRKTLQKRVEEEEARYP) has biased composition (basic and acidic residues). Trp-186 contacts FMN. 192–194 (RLH) contacts substrate. Arg-196 is a binding site for FMN.

It belongs to the pyridoxamine 5'-phosphate oxidase family. Homodimer. FMN serves as cofactor.

The enzyme catalyses pyridoxamine 5'-phosphate + O2 + H2O = pyridoxal 5'-phosphate + H2O2 + NH4(+). It catalyses the reaction pyridoxine 5'-phosphate + O2 = pyridoxal 5'-phosphate + H2O2. It functions in the pathway cofactor metabolism; pyridoxal 5'-phosphate salvage; pyridoxal 5'-phosphate from pyridoxamine 5'-phosphate: step 1/1. The protein operates within cofactor metabolism; pyridoxal 5'-phosphate salvage; pyridoxal 5'-phosphate from pyridoxine 5'-phosphate: step 1/1. Catalyzes the oxidation of either pyridoxine 5'-phosphate (PNP) or pyridoxamine 5'-phosphate (PMP) into pyridoxal 5'-phosphate (PLP). The sequence is that of Pyridoxine/pyridoxamine 5'-phosphate oxidase from Granulibacter bethesdensis (strain ATCC BAA-1260 / CGDNIH1).